A 157-amino-acid polypeptide reads, in one-letter code: 2-C-methyl-D-erythritol 2,4-cyclodiphosphate synthase (157 aa).

Residues Asp8 and His10 each contribute to the a divalent metal cation site. 4-CDP-2-C-methyl-D-erythritol 2-phosphate-binding positions include 8 to 10 (DVH) and 34 to 35 (HS). A divalent metal cation is bound at residue His42. 4-CDP-2-C-methyl-D-erythritol 2-phosphate contacts are provided by residues 56–58 (DIG), 61–65 (FPDTD), 100–106 (AQAPKMA), 132–135 (TTTE), Phe139, and Arg142.

This sequence belongs to the IspF family. As to quaternary structure, homotrimer. Requires a divalent metal cation as cofactor.

It catalyses the reaction 4-CDP-2-C-methyl-D-erythritol 2-phosphate = 2-C-methyl-D-erythritol 2,4-cyclic diphosphate + CMP. It functions in the pathway isoprenoid biosynthesis; isopentenyl diphosphate biosynthesis via DXP pathway; isopentenyl diphosphate from 1-deoxy-D-xylulose 5-phosphate: step 4/6. Its function is as follows. Involved in the biosynthesis of isopentenyl diphosphate (IPP) and dimethylallyl diphosphate (DMAPP), two major building blocks of isoprenoid compounds. Catalyzes the conversion of 4-diphosphocytidyl-2-C-methyl-D-erythritol 2-phosphate (CDP-ME2P) to 2-C-methyl-D-erythritol 2,4-cyclodiphosphate (ME-CPP) with a corresponding release of cytidine 5-monophosphate (CMP). This is 2-C-methyl-D-erythritol 2,4-cyclodiphosphate synthase from Pseudomonas aeruginosa (strain ATCC 15692 / DSM 22644 / CIP 104116 / JCM 14847 / LMG 12228 / 1C / PRS 101 / PAO1).